A 311-amino-acid chain; its full sequence is DNA-directed RNA polymerase subunit alpha (311 aa).

Positions 1–227 are alpha N-terminal domain (alpha-NTD); it reads MAQFQIECIE…NLFCSLRNLD (227 aa). Residues 239 to 311 are alpha C-terminal domain (alpha-CTD); the sequence is DKKISQVLIE…GISLPKEKSD (73 aa).

The protein belongs to the RNA polymerase alpha chain family. In plastids the minimal PEP RNA polymerase catalytic core is composed of four subunits: alpha, beta, beta', and beta''. When a (nuclear-encoded) sigma factor is associated with the core the holoenzyme is formed, which can initiate transcription.

The protein resides in the plastid. It localises to the chloroplast. The enzyme catalyses RNA(n) + a ribonucleoside 5'-triphosphate = RNA(n+1) + diphosphate. In terms of biological role, DNA-dependent RNA polymerase catalyzes the transcription of DNA into RNA using the four ribonucleoside triphosphates as substrates. The chain is DNA-directed RNA polymerase subunit alpha from Pyropia yezoensis (Susabi-nori).